Consider the following 353-residue polypeptide: D-alanine--D-alanine ligase A (353 aa).

Positions 141 to 346 (KRLVNEAGLS…YPEIINRLVA (206 aa)) constitute an ATP-grasp domain. Position 169–224 (169–224 (EQALGLPIFIKPARQGSSVGVHKVVTEADYQAAMSDGFTYDDKLLAEEFIQAREVE)) interacts with ATP. Residues D300, E313, and N315 each coordinate Mg(2+).

Belongs to the D-alanine--D-alanine ligase family. Requires Mg(2+) as cofactor. The cofactor is Mn(2+).

It localises to the cytoplasm. The catalysed reaction is 2 D-alanine + ATP = D-alanyl-D-alanine + ADP + phosphate + H(+). It participates in cell wall biogenesis; peptidoglycan biosynthesis. Cell wall formation. In Brucella suis biovar 1 (strain 1330), this protein is D-alanine--D-alanine ligase A.